The chain runs to 7067 residues: Replicase polyprotein 1ab (7067 aa).

A CoV Nsp1 globular domain is found at 12–127 (THVQLSLPVL…YRNVLLRKNG (116 aa)). The 32-residue stretch at 148–179 (ELGTDPIEDYEQNWNTKHGSGALRELTRELNG) folds into the BetaCoV Nsp1 C-terminal domain. The CoV Nsp2 N-terminal domain maps to 183–456 (TRYVDNNFCG…NEDLLEILNR (274 aa)). Residues Cys-200, Cys-231, His-234, His-236, Cys-323, Cys-326, Cys-341, Cys-344, Cys-370, Cys-373, His-382, and Cys-416 each contribute to the Zn(2+) site. A C2H2 region spans residues 200-236 (CIKDFLARAGKSMCTLSEQLDYIESKRGVYCCREHEH). The segment at 323-344 (CNHCDEVSWQTCDFLKATCEQC) is C4. Residues 370-416 (CPACQDPEVGPEHSVADYHNHSNIETRLRKGGRTKCFGGCVFSYVGC) form a C2HC region. In terms of domain architecture, CoV Nsp2 middle spans 458–688 (RVNINIVGDF…LGVVNKALEM (231 aa)). Residues 690-818 (LDQVTIAGTK…TNNVFRLKGG (129 aa)) form the CoV Nsp2 C-terminal domain. The 109-residue stretch at 822–930 (KGVTFGEDTV…MYCSFYPPDE (109 aa)) folds into the Ubiquitin-like 1 domain. Macro domains follow at residues 998–1164 (VNQF…LDYL), 1201–1329 (KIKA…LPSE), and 1337–1464 (VLGT…TSSS). One can recognise a DPUP domain in the interval 1466 to 1532 (TPEEYFVETT…PLDKLKSLLS (67 aa)). A Ubiquitin-like 2 domain is found at 1536 to 1591 (VKTIKVFTTVDNTNLHTHIVDMSMTYGQQFGPTYLDGADVTKIKPHVNHEGKTFFV). The region spanning 1605-1869 (YYHTIDESFL…YTEIEPKLDG (265 aa)) is the Peptidase C16 domain. Cys-1645 functions as the For PL-PRO activity in the catalytic mechanism. Cys-1723, Cys-1726, Cys-1758, and Cys-1760 together coordinate Zn(2+). Residues 1723-1760 (CKHCGQKTTTLKGVEAVMYMGTLSYDELKTGVSIPCVC) form a C4-type zinc finger. Residues His-1806 and Asp-1820 each act as for PL-PRO activity in the active site. Positions 1882–1992 (PIDLVPTQPM…CLWSTKPVDT (111 aa)) constitute a Nucleic acid-binding domain. The G2M domain occupies 2017–2126 (TTSEEVVENP…LGQTAVITSN (110 aa)). Positions 2086-2365 (LALGLKTLAT…IFFASFYYVW (280 aa)) are HD1. A helical membrane pass occupies residues 2197 to 2217 (LFTIVMWLLLLSICLGSLTYV). The region spanning 2218–2288 (TAVLGVCLSS…QVTISSYKLD (71 aa)) is the 3Ecto domain. 2 cysteine pairs are disulfide-bonded: Cys-2234–Cys-2262 and Cys-2253–Cys-2259. 2 helical membrane-spanning segments follow: residues 2298 to 2318 (WLLA…SAIM) and 2345 to 2365 (MAPV…YYVW). The segment at 2366–2456 (KSYVHIMDGC…QFKRPINPTD (91 aa)) is Y1. One can recognise a CoV Nsp3 Y domain in the interval 2366-2734 (KSYVHIMDGC…ITTKISLKGG (369 aa)). Residues His-2370, Cys-2375, Cys-2380, Cys-2383, Cys-2416, His-2419, Cys-2423, and Cys-2426 each coordinate Zn(2+). The tract at residues 2370 to 2383 (HIMDGCTSSTCMMC) is ZF1. Positions 2416–2426 (CKAHNWNCLNC) are ZF2. The segment at 2457–2551 (QSAYVVDSVT…LLDQALVSDV (95 aa)) is Y2. Positions 2457 to 2734 (QSAYVVDSVT…ITTKISLKGG (278 aa)) are coV-Y. The interval 2552–2633 (GDSTEVSVKM…ECLKLSHHSD (82 aa)) is Y3. Residues 2634–2734 (IEVTGDSCNN…ITTKISLKGG (101 aa)) are Y4. The next 7 membrane-spanning stretches (helical) occupy residues 2744–2764 (LLKV…IMPV), 2986–3006 (PGVF…TPLV), 3016–3036 (ASVV…YYFM), 3048–3068 (VVAA…LAPA), 3071–3091 (FLPG…TNDV), 3099–3119 (WFAM…VFCI), and 3136–3156 (VMFN…TFLL). An HD2 region spans residues 2749 to 3156 (LLCVLAALFC…EEAALCTFLL (408 aa)). One can recognise a Nsp4C domain in the interval 3136-3234 (VMFNGVTFST…QTSITSAVLQ (99 aa)). Residues 3235–3540 (SGFRKMAFPS…VRQCSGVTFQ (306 aa)) enclose the Peptidase C30 domain. Residues His-3275 and Cys-3379 each act as for 3CL-PRO activity in the active site. The next 7 membrane-spanning stretches (helical) occupy residues 3558 to 3578 (FLTS…FFVY), 3580 to 3600 (NAFL…MLLV), 3606 to 3626 (FLCL…MVYM), 3652 to 3672 (DCVM…RTVY), 3679 to 3698 (VWTL…GNSL), 3722 to 3742 (IMFL…LLFI), and 3750 to 3770 (IMLV…LFCL). The interval 3558 to 3770 (FLTSLLILVQ…CCCYFGLFCL (213 aa)) is HD3. The 83-residue stretch at 3831–3913 (SKMSDVKCTS…EMLDNRATLQ (83 aa)) folds into the RdRp Nsp7 cofactor domain. Residues 3914–4111 (AIASEFSSLP…LRANSAVKLQ (198 aa)) enclose the RdRp Nsp8 cofactor domain. Residues 4112-4224 (NNELSPVALR…GSLAATVRLQ (113 aa)) enclose the Nsp9 ssRNA-binding domain. In terms of domain architecture, ExoN/MTase coactivator spans 4225–4363 (AGNATEVPAN…CDQLREPMMQ (139 aa)). Residues Cys-4298, Cys-4301, His-4307, Cys-4314, Cys-4341, Cys-4344, Cys-4352, and Cys-4354 each contribute to the Zn(2+) site. Zinc fingers lie at residues 4298–4314 (CLYC…KGFC) and 4341–4354 (CTVC…GCSC). One can recognise a NiRAN domain in the interval 4370 to 4624 (FLNRVCGVSA…AAESHMDADL (255 aa)). Mn(2+) contacts are provided by Asn-4572 and Asp-4581. A Nsp12 Interface domain is found at 4629–4727 (VKWDLLKYDF…HNQDVNLHSS (99 aa)). Residues His-4658, Cys-4664, Cys-4669, Cys-4673, and Cys-4850 each contribute to the Zn(2+) site. The Nsp12 RNA-dependent RNA polymerase domain maps to 4728-5295 (RLSFKELLVY…AMYTPHTVLQ (568 aa)). The interval 4730-4944 (SFKELLVYAA…HQKLLKSIAA (215 aa)) is rdRp Fingers N-ter. Residues 4945–4983 (TRGATVVIGTSKFYGGWHNMLKTVYSDVESPHLMGWDYP) form a rdRp Palm N-ter region. Residues 4975–5137 (PHLMGWDYPK…CYNSNYAAQG (163 aa)) enclose the RdRp catalytic domain. Residues 4984 to 5042 (KCDRAMPNMLRIMASLILARKHSTCCNLSHRFYRLANECAQVLSEMVMCGGSLYVKPGG) form a rdRp Fingers C-ter region. The Zn(2+) site is built by His-5005, Cys-5008, and Cys-5009. The segment at 5043–5178 (TSSGDATTAY…TRGPHEFCSQ (136 aa)) is rdRp Palm C-ter. Active-site residues include Ser-5122, Asp-5123, and Asp-5124. The tract at residues 5179 to 5295 (HTMLVKQGDD…AMYTPHTVLQ (117 aa)) is rdRp Thumb. Residues 5296-5408 (AVGACVLCNS…TDFNAIATCD (113 aa)) enclose the CV ZBD domain. Zn(2+) is bound by residues Cys-5300, Cys-5303, Cys-5311, Cys-5314, Cys-5321, Cys-5324, His-5328, His-5334, Cys-5345, Cys-5350, Cys-5367, and His-5370. Positions 5552–5733 (NISNEFSSNV…MKTIGPDMFL (182 aa)) constitute a (+)RNA virus helicase ATP-binding domain. Residue 5577 to 5584 (GPPGTGKS) participates in ATP binding. Positions 5734 to 5903 (GTCRRCPAEI…TLQAENVTGL (170 aa)) constitute a (+)RNA virus helicase C-terminal domain. In terms of domain architecture, ExoN spans 5968-6183 (MFITREEAIR…RCLAVHECFV (216 aa)). Active-site residues include Asp-5986, Glu-5988, and Glu-6087. Residues Cys-6103, Cys-6106, Cys-6122, His-6125, His-6153, Cys-6157, and His-6160 each contribute to the Zn(2+) site. Residues His-6164 and Asp-6169 contribute to the active site. Cys-6175 lines the Zn(2+) pocket. The 232-residue stretch at 6192–6423 (YPIIGDELKI…NLWNTFTKLQ (232 aa)) folds into the N7-MTase domain. Position 6227–6233 (6227–6233 (DIGNPKA)) interacts with S-adenosyl-L-methionine. Positions 6310–6324 (CDGGSLYVNKHAFHT) are gpppA-binding. The Zn(2+) site is built by Cys-6348, Cys-6369, Cys-6380, and His-6383. The Nsp15 N-terminal oligomerization domain maps to 6424-6484 (SLENVAYNVV…NVAFELWAKR (61 aa)). The AV-Nsp11N/CoV-Nsp15M domain occupies 6485–6610 (NIKPVPEIKI…YFKKVDGIIQ (126 aa)). One can recognise a NendoU domain in the interval 6627-6766 (KPRSQMETDF…KDGHVETFYP (140 aa)). Catalysis depends on residues His-6657, His-6672, Lys-6712, Lys-6815, Asp-6899, Lys-6939, and Glu-6972. One can recognise a Nidovirus-type SAM-dependent 2'-O-MTase domain in the interval 6771–7065 (SQAWQPGVAM…RVVVSSDILV (295 aa)).

This sequence belongs to the coronaviruses polyprotein 1ab family. In terms of assembly, interacts with host PHB and PHB2. As to quaternary structure, interacts with papain-like protease nsp3 and non-structural protein 6. Monomer. Homodimer. Only the homodimer shows catalytic activity. In terms of assembly, interacts with nsp8 and nsp12 to form the replication-transcription complex (RTC): nsp12, nsp7, two subunits of nsp8, and up to two subunits of nsp13. As to quaternary structure, interacts with nsp7, nsp13 and nsp12 to form the replication-transcription complex (RTC): nsp12, nsp7, two subunits of nsp8, and up to two subunits of nsp13. Interacts with nsp12. In terms of assembly, interacts with proofreading exoribonuclease nsp14 and 2'-O-methyltransferase nsp16; these interactions enhance nsp14 and nsp16 enzymatic activities. As to quaternary structure, interacts with nsp7 and nsp8 to form the replication-transcription complex (RTC): nsp12, nsp7, two subunits of nsp8, and up to two subunits of nsp13. Interacts with nsp9. Interacts with nsp8 to form the replication-transcription complex (RTC): nsp12, nsp7, two subunits of nsp8, and up to two subunits of nsp13. Requires Mn(2+) as cofactor. The cofactor is Mg(2+). Post-translationally, specific enzymatic cleavages in vivo by its own proteases yield mature proteins. 3CL-PRO and PL-PRO proteinases are autocatalytically processed.

The protein resides in the host membrane. Its subcellular location is the host cytoplasm. It localises to the host perinuclear region. It is found in the host endoplasmic reticulum-Golgi intermediate compartment. The enzyme catalyses RNA(n) + a ribonucleoside 5'-triphosphate = RNA(n+1) + diphosphate. The catalysed reaction is ATP + H2O = ADP + phosphate + H(+). It catalyses the reaction Thiol-dependent hydrolysis of ester, thioester, amide, peptide and isopeptide bonds formed by the C-terminal Gly of ubiquitin (a 76-residue protein attached to proteins as an intracellular targeting signal).. It carries out the reaction a 5'-end (N(7)-methyl 5'-triphosphoguanosine)-ribonucleoside in mRNA + S-adenosyl-L-methionine = a 5'-end (N(7)-methyl 5'-triphosphoguanosine)-(2'-O-methyl-ribonucleoside) in mRNA + S-adenosyl-L-homocysteine + H(+). The enzyme catalyses uridylyl-uridylyl-ribonucleotide-RNA = a 3'-end uridylyl-2',3'-cyclophospho-uridine-RNA + a 5'-end dephospho-ribonucleoside-RNA. The catalysed reaction is a 5'-end diphospho-ribonucleoside in mRNA + GTP + H(+) = a 5'-end (5'-triphosphoguanosine)-ribonucleoside in mRNA + diphosphate. It catalyses the reaction a 5'-end (5'-triphosphoguanosine)-ribonucleoside in mRNA + S-adenosyl-L-methionine = a 5'-end (N(7)-methyl 5'-triphosphoguanosine)-ribonucleoside in mRNA + S-adenosyl-L-homocysteine. Functionally, the replicase polyprotein of coronaviruses is a multifunctional protein: it contains the activities necessary for the transcription of negative stranded RNA, leader RNA, subgenomic mRNAs and progeny virion RNA as well as proteinases responsible for the cleavage of the polyprotein into functional products. In terms of biological role, inhibits host translation by interacting with the 40S ribosomal subunit. The nsp1-40S ribosome complex further induces an endonucleolytic cleavage near the 5'UTR of host mRNAs, targeting them for degradation. Viral mRNAs are not susceptible to nsp1-mediated endonucleolytic RNA cleavage thanks to the presence of a 5'-end leader sequence and are therefore protected from degradation. By suppressing host gene expression, nsp1 facilitates efficient viral gene expression in infected cells and evasion from host immune response. May play a role in the modulation of host cell survival signaling pathway by interacting with host PHB and PHB2. Indeed, these two proteins play a role in maintaining the functional integrity of the mitochondria and protecting cells from various stresses. Its function is as follows. Responsible for the cleavages located at the N-terminus of the replicase polyprotein. In addition, PL-PRO possesses a deubiquitinating/deISGylating activity and processes both 'Lys-48'- and 'Lys-63'-linked polyubiquitin chains from cellular substrates. Participates together with nsp4 in the assembly of virally-induced cytoplasmic double-membrane vesicles necessary for viral replication. Antagonizes innate immune induction of type I interferon by blocking the phosphorylation, dimerization and subsequent nuclear translocation of host IRF3. Also prevents host NF-kappa-B signaling. Functionally, participates in the assembly of virally-induced cytoplasmic double-membrane vesicles necessary for viral replication. In terms of biological role, cleaves the C-terminus of replicase polyprotein at 11 sites. Recognizes substrates containing the core sequence [ILMVF]-Q-|-[SGACN]. Also able to bind an ADP-ribose-1''-phosphate (ADRP). Plays a role in the initial induction of autophagosomes from host endoplasmic reticulum. Later, limits the expansion of these phagosomes that are no longer able to deliver viral components to lysosomes. Its function is as follows. Forms a hexadecamer with nsp8 (8 subunits of each) that may participate in viral replication by acting as a primase. Alternatively, may synthesize substantially longer products than oligonucleotide primers. Functionally, forms a hexadecamer with nsp7 (8 subunits of each) that may participate in viral replication by acting as a primase. Alternatively, may synthesize substantially longer products than oligonucleotide primers. In terms of biological role, forms a primer, NSP9-pU, which is utilized by the polymerase for the initiation of RNA chains. Interacts with ribosome signal recognition particle RNA (SRP). Together with NSP8, suppress protein integration into the cell membrane, thereby disrupting host immune defenses. Plays a pivotal role in viral transcription by stimulating both nsp14 3'-5' exoribonuclease and nsp16 2'-O-methyltransferase activities. Therefore plays an essential role in viral mRNAs cap methylation. Its function is as follows. RNA-directed RNA polymerase that catalyzes the transcription of viral genomic and subgenomic RNAs. Acts in complex with nsp7 and nsp8 to transcribe both the minus and positive strands of genomic RNA. The kinase-like NiRAN domain of NSP12 attaches one or more nucleotides to the amino terminus of NSP9, forming a covalent RNA-protein intermediate that serves as transcription/replication primer. Subgenomic RNAs (sgRNAs) are formed by discontinuous transcription: The polymerase has the ability to pause at transcription-regulating sequences (TRS) and jump to the leader TRS, resulting in a major deletion. This creates a series of subgenomic RNAs that are replicated, transcribed and translated. In addition, Nsp12 is a subunit of the viral RNA capping enzyme that catalyzes the RNA guanylyltransferase reaction for genomic and sub-genomic RNAs. Subsequently, the NiRAN domain transfers RNA to GDP, and forms the core cap structure GpppA-RNA. Functionally, multi-functional protein with a zinc-binding domain in N-terminus displaying RNA and DNA duplex-unwinding activities with 5' to 3' polarity. Activity of helicase is dependent on magnesium. In terms of biological role, plays a role in viral RNA synthesis through two distinct activities. The N7-guanine methyltransferase activity plays a role in the formation of the cap structure GpppA-RNA. The proofreading exoribonuclease reduces the sensitivity of the virus to RNA mutagens during replication. This activity acts on both ssRNA and dsRNA in a 3'-5' direction. Plays a role in viral transcription/replication and prevents the simultaneous activation of host cell dsRNA sensors, such as MDA5/IFIH1, OAS, and PKR. Acts by degrading the 5'-polyuridines generated during replication of the poly(A) region of viral genomic and subgenomic RNAs. Catalyzes a two-step reaction in which a 2'3'-cyclic phosphate (2'3'-cP) is first generated by 2'-O transesterification, which is then hydrolyzed to a 3'-phosphate (3'-P). If not degraded, poly(U) RNA would hybridize with poly(A) RNA tails and activate host dsRNA sensors. Its function is as follows. Methyltransferase that mediates mRNA cap 2'-O-ribose methylation to the 5'-cap structure of viral mRNAs. N7-methyl guanosine cap is a prerequisite for binding of nsp16. Therefore plays an essential role in viral mRNAs cap methylation which is essential to evade immune system. The sequence is that of Replicase polyprotein 1ab (rep) from Bat coronavirus HKU3 (BtCoV).